A 196-amino-acid chain; its full sequence is Phosphoheptose isomerase (196 aa).

The SIS domain maps to 36–196 (MTNCLINGGK…GIDALLLGVE (161 aa)). Substrate is bound at residue 51–53 (NGG). Residues His-60 and Glu-64 each contribute to the Zn(2+) site. Substrate contacts are provided by residues Glu-64, 93–94 (ND), 119–121 (STS), Ser-124, and Gln-174. Positions 174 and 182 each coordinate Zn(2+).

The protein belongs to the SIS family. GmhA subfamily. In terms of assembly, homotetramer. Requires Zn(2+) as cofactor.

It localises to the cytoplasm. It catalyses the reaction 2 D-sedoheptulose 7-phosphate = D-glycero-alpha-D-manno-heptose 7-phosphate + D-glycero-beta-D-manno-heptose 7-phosphate. It participates in carbohydrate biosynthesis; D-glycero-D-manno-heptose 7-phosphate biosynthesis; D-glycero-alpha-D-manno-heptose 7-phosphate and D-glycero-beta-D-manno-heptose 7-phosphate from sedoheptulose 7-phosphate: step 1/1. Its function is as follows. Catalyzes the isomerization of sedoheptulose 7-phosphate in D-glycero-D-manno-heptose 7-phosphate. This chain is Phosphoheptose isomerase, found in Dechloromonas aromatica (strain RCB).